The sequence spans 890 residues: Translation initiation factor IF-2 (890 aa).

The disordered stretch occupies residues 45 to 303 (LIDHLNQKNS…SLQQGFQKPA (259 aa)). Over residues 67–81 (STLNIPGTGGKSKSV) the composition is skewed to polar residues. The span at 92 to 217 (VKRDPQEAER…RMAEENKWTD (126 aa)) shows a compositional bias: basic and acidic residues. Over residues 252–266 (GRGRNAKAARPKKGN) the composition is skewed to basic residues. Residues 267–280 (KHAESKADREEARA) show a composition bias toward basic and acidic residues. The tr-type G domain maps to 389-558 (PRAPVVTIMG…LLQAEVLELK (170 aa)). The G1 stretch occupies residues 398–405 (GHVDHGKT). Residue 398–405 (GHVDHGKT) coordinates GTP. The segment at 423–427 (GITQH) is G2. The segment at 444–447 (DTPG) is G3. Residues 444 to 448 (DTPGH) and 498 to 501 (NKID) each bind GTP. A G4 region spans residues 498–501 (NKID). Residues 534–536 (SAK) form a G5 region. N6-acetyllysine is present on lysine 808.

This sequence belongs to the TRAFAC class translation factor GTPase superfamily. Classic translation factor GTPase family. IF-2 subfamily.

The protein resides in the cytoplasm. One of the essential components for the initiation of protein synthesis. Protects formylmethionyl-tRNA from spontaneous hydrolysis and promotes its binding to the 30S ribosomal subunits. Also involved in the hydrolysis of GTP during the formation of the 70S ribosomal complex. This chain is Translation initiation factor IF-2, found in Shigella boydii serotype 18 (strain CDC 3083-94 / BS512).